The chain runs to 155 residues: Small ribosomal subunit protein uS7 (155 aa).

It belongs to the universal ribosomal protein uS7 family. In terms of assembly, part of the 30S ribosomal subunit. Contacts proteins S9 and S11.

Functionally, one of the primary rRNA binding proteins, it binds directly to 16S rRNA where it nucleates assembly of the head domain of the 30S subunit. Is located at the subunit interface close to the decoding center, probably blocks exit of the E-site tRNA. This Chlorobium phaeovibrioides (strain DSM 265 / 1930) (Prosthecochloris vibrioformis (strain DSM 265)) protein is Small ribosomal subunit protein uS7.